The primary structure comprises 897 residues: Isoleucine--tRNA ligase (897 aa).

A 'HIGH' region motif is present at residues 59 to 69 (PYANGDIHVGH). Residue Glu-552 coordinates L-isoleucyl-5'-AMP. The 'KMSKS' region motif lies at 593 to 597 (KMSKS). Lys-596 provides a ligand contact to ATP. Zn(2+) contacts are provided by Cys-872, Cys-875, Cys-890, and Cys-893.

It belongs to the class-I aminoacyl-tRNA synthetase family. IleS type 1 subfamily. As to quaternary structure, monomer. Requires Zn(2+) as cofactor.

It localises to the cytoplasm. The enzyme catalyses tRNA(Ile) + L-isoleucine + ATP = L-isoleucyl-tRNA(Ile) + AMP + diphosphate. Functionally, catalyzes the attachment of isoleucine to tRNA(Ile). As IleRS can inadvertently accommodate and process structurally similar amino acids such as valine, to avoid such errors it has two additional distinct tRNA(Ile)-dependent editing activities. One activity is designated as 'pretransfer' editing and involves the hydrolysis of activated Val-AMP. The other activity is designated 'posttransfer' editing and involves deacylation of mischarged Val-tRNA(Ile). The polypeptide is Isoleucine--tRNA ligase (Mycoplasmoides gallisepticum (strain R(low / passage 15 / clone 2)) (Mycoplasma gallisepticum)).